We begin with the raw amino-acid sequence, 22 residues long: Probable ATP-dependent Clp protease proteolytic subunit (22 aa).

The protein belongs to the peptidase S14 family. In terms of assembly, component of the chloroplastic Clp protease core complex.

The enzyme catalyses Hydrolysis of proteins to small peptides in the presence of ATP and magnesium. alpha-casein is the usual test substrate. In the absence of ATP, only oligopeptides shorter than five residues are hydrolyzed (such as succinyl-Leu-Tyr-|-NHMec, and Leu-Tyr-Leu-|-Tyr-Trp, in which cleavage of the -Tyr-|-Leu- and -Tyr-|-Trp bonds also occurs).. In terms of biological role, cleaves peptides in various proteins in a process that requires ATP hydrolysis. Has a chymotrypsin-like activity. Plays a major role in the degradation of misfolded proteins. In Populus euphratica (Euphrates poplar), this protein is Probable ATP-dependent Clp protease proteolytic subunit.